A 347-amino-acid chain; its full sequence is Autoinducer 2 import system permease protein LsrC (347 aa).

The next 9 helical transmembrane spans lie at 14-34, 39-59, 72-92, 93-113, 115-135, 155-175, 213-233, 249-269, and 284-304; these read LLAIVCLFVFPGALDSQYLSV, MVFSSAQILMLLAIGATMVML, GMCAVLLGVMLNAGYSLPVAC, LATLILGIVAGFFNGVLVAWL, IPAIVATLGTLGLYRGIMLLW, VFLGISAIGWFTLVLALLMAW, LNGGMAALAGIVFASQIGFIP, VLGGISLLGGSGTVIGAILGA, and IPAWWNDFIAGLVLLGVLVFD.

The protein belongs to the binding-protein-dependent transport system permease family. AraH/RbsC subfamily. In terms of assembly, the complex is composed of two ATP-binding proteins (LsrA), two transmembrane proteins (LsrC and LsrD) and a solute-binding protein (LsrB).

It localises to the cell inner membrane. Functionally, part of the ABC transporter complex LsrABCD involved in autoinducer 2 (AI-2) import. Probably responsible for the translocation of the substrate across the membrane. This Salmonella paratyphi A (strain ATCC 9150 / SARB42) protein is Autoinducer 2 import system permease protein LsrC (lsrC).